A 598-amino-acid polypeptide reads, in one-letter code: Fibulin-1 (598 aa).

31 cysteine pairs are disulfide-bonded: alanine 1-cysteine 25, cysteine 7-cysteine 26, cysteine 28-cysteine 52, cysteine 29-cysteine 59, cysteine 42-cysteine 60, cysteine 96-cysteine 106, cysteine 102-cysteine 115, cysteine 117-cysteine 130, cysteine 136-cysteine 149, cysteine 143-cysteine 158, cysteine 164-cysteine 176, cysteine 182-cysteine 195, cysteine 189-cysteine 204, cysteine 210-cysteine 222, cysteine 228-cysteine 242, cysteine 257-cysteine 270, cysteine 275-cysteine 288, cysteine 282-cysteine 297, cysteine 299-cysteine 312, cysteine 318-cysteine 330, cysteine 326-cysteine 339, cysteine 341-cysteine 354, cysteine 360-cysteine 369, cysteine 365-cysteine 378, cysteine 380-cysteine 394, cysteine 400-cysteine 413, cysteine 409-cysteine 422, cysteine 424-cysteine 438, cysteine 444-cysteine 457, cysteine 451-cysteine 466, and cysteine 471-cysteine 483. Anaphylatoxin-like domains lie at 1–27 and 28–60; these read ANEQ…RCCH and CCLL…RACC. The N-linked (GlcNAc...) asparagine glycan is linked to asparagine 14. Residues 92–131 enclose the EGF-like 1 domain; that stretch reads LNDRCRGGGPCKQQCRDTGDEVVCSCFVGYQLLSDGVSCE. Residues 132-177 enclose the EGF-like 2; calcium-binding domain; sequence DVNECITGSHSCRLGESCINTVGSFRCQRDSSCGTGYELTEDNSCK. One can recognise an EGF-like 3; calcium-binding domain in the interval 178 to 223; sequence DIDQCESGIHNCLPDFICQNTLGSFRCRPKLQCKNGFIQDALANCI. The 47-residue stretch at 224–270 folds into the EGF-like 4; calcium-binding domain; sequence DINECLSIVSAPCPTGHTCINTEGSYTQKNVPNCGRGYHLNEEGTRC. The region spanning 271–313 is the EGF-like 5; calcium-binding domain; that stretch reads DVNECAPPAEPCGKGHRCVNSPGSFRCECKTGYYFDGISRMCV. Positions 271–355 are self-association and FN1-binding; that stretch reads DVNECAPPAE…RLSVDGRSCE (85 aa). Positions 314 to 355 constitute an EGF-like 6; calcium-binding domain; the sequence is DVNECQRYPGRLCGHKCENTLGSYVCSCSVGFRLSVDGRSCE. One can recognise an EGF-like 7; calcium-binding domain in the interval 356–395; it reads DINECSSSPCSQECANVYGSYQCYCRRGYQLSDVDGVTCE. The EGF-like 8; calcium-binding domain maps to 396–439; that stretch reads DIDECALPTGGHICSYRCINIPGSFQCSCPASGYRLAPNGRNCQ. The EGF-like 9; calcium-binding domain maps to 440–484; that stretch reads DIDECVTGIHNCSINETCFNIQGGFRCLAFECPENYRRSAATRCE. 2 N-linked (GlcNAc...) asparagine glycosylation sites follow: asparagine 450 and asparagine 454.

The protein belongs to the fibulin family. As to quaternary structure, homomultimerizes and interacts with various extracellular matrix components. Interacts with FBLN7. Interacts with the mature/soluble form of DTR. Interacts with CCN3.

It localises to the secreted. Its subcellular location is the extracellular space. The protein resides in the extracellular matrix. Incorporated into fibronectin-containing matrix fibers. May play a role in cell adhesion and migration along protein fibers within the extracellular matrix (ECM). Could be important for certain developmental processes and contribute to the supramolecular organization of ECM architecture, in particular to those of basement membranes. May serve to anchor the mature/soluble form of DTR to its fibers as it migrates through the extracellular matrix. The direct physical association with DTR may be useful in such tissue developmental processes as wound healing. In Chlorocebus aethiops (Green monkey), this protein is Fibulin-1 (FBLN1).